The chain runs to 494 residues: uncharacterized protein (494 aa).

2 VOC domains span residues 18–174 and 229–408; these read FIDC…FINR and SLDH…FGIL. Histidine 232, histidine 349, and glutamate 460 together coordinate Fe cation.

Belongs to the 4HPPD family. It depends on Fe cation as a cofactor.

May have dioxygenase activity. This is an uncharacterized protein from Dictyostelium discoideum (Social amoeba).